A 465-amino-acid polypeptide reads, in one-letter code: Muscarinic acetylcholine receptor M2 (465 aa).

Residues 1 to 21 (MNNSTNSSNNVALTSPYKTFE) are Extracellular-facing. N-linked (GlcNAc...) asparagine glycosylation is found at N2, N3, and N6. A helical membrane pass occupies residues 22 to 44 (VVFIVLVAGSLSLVTIIGNILVM). The Cytoplasmic segment spans residues 45 to 58 (VSIKVNRHLQTVNN). Residues 59–79 (YFLFSLACADLIIGVFSMNLY) form a helical membrane-spanning segment. The Extracellular portion of the chain corresponds to 80 to 96 (TLYTVIGYWPLGPVVCD). C95 and C175 are disulfide-bonded. The chain crosses the membrane as a helical span at residues 97–118 (LWLALDYVVSNASVMNLLIISF). The Important for signaling signature appears at 119-121 (DRY). Residues 119 to 138 (DRYFCVTKPLTYPVKRTTKM) are Cytoplasmic-facing. The helical transmembrane segment at 139-161 (AGMMIAAAWVLSFILWAPAILFW) threads the bilayer. Residues 162-183 (QFIVGVRTVEDGECYIQFFSNA) are Extracellular-facing. A helical membrane pass occupies residues 184 to 208 (AVTFGTAIAAFYLPVIIMTVLYWHI). At 209–386 (SRASKSRIKK…PPSREKKVTR (178 aa)) the chain is on the cytoplasmic side. Residues 217-319 (KKDKKEPVAN…SVGHSKDENS (103 aa)) form a disordered region. Phosphoserine is present on S231. A compositionally biased stretch (basic and acidic residues) spans 253–269 (GLEHNKIQNGKTPRDAV). 2 stretches are compositionally biased toward polar residues: residues 283–292 (NDSTSVSAVA) and 303–312 (DENTVSTSVG). A helical transmembrane segment spans residues 387 to 409 (TILAILLAFIITWAPYNVMVLIN). Residues 410–417 (TFCAPCIP) are Extracellular-facing. A disulfide bridge links C412 with C415. A helical transmembrane segment spans residues 418 to 441 (NTVWTIGYWLCYINSTINPACYAL). Positions 435-439 (NPACY) match the Important for signaling motif. The Cytoplasmic portion of the chain corresponds to 442 to 465 (CNATFKKTFKHLLMCHYKNIGATR). Residues T445, T449, and T464 each carry the phosphothreonine modification.

Belongs to the G-protein coupled receptor 1 family. Muscarinic acetylcholine receptor subfamily. CHRM2 sub-subfamily. Interacts with ARRB1 and ARRB2. Interacts with RACK1; the interaction regulates CHRM2 internalization. Post-translationally, phosphorylated in response to agonist treatment.

It is found in the cell membrane. The protein localises to the postsynaptic cell membrane. Its function is as follows. The muscarinic acetylcholine receptor mediates various cellular responses, including inhibition of adenylate cyclase, breakdown of phosphoinositides and modulation of potassium channels through the action of G proteins. Primary transducing effect is adenylate cyclase inhibition. Signaling promotes phospholipase C activity, leading to the release of inositol trisphosphate (IP3); this then triggers calcium ion release into the cytosol. This chain is Muscarinic acetylcholine receptor M2 (CHRM2), found in Bos taurus (Bovine).